The primary structure comprises 595 residues: GRB2-associated-binding protein 3 (595 aa).

A PH domain is found at 5-117 (DTVCMGWLIK…WVHSISQVCN (113 aa)). The segment at 295–339 (SGVKELNIMSNTPPPRPPKPSYLSEQRQDQPLLTGHSSNKKPGYT) is disordered. A compositionally biased stretch (polar residues) spans 317 to 331 (LSEQRQDQPLLTGHS). S346 carries the post-translational modification Phosphoserine. Disordered regions lie at residues 389–408 (PSAEDSYVPMSPKGTASELR) and 418–463 (PMSS…QEHT). The span at 454–463 (RNLSTIQEHT) shows a compositional bias: polar residues. Residue S480 is modified to Phosphoserine. A disordered region spans residues 493–513 (STPSEEEEEEEEEEEEEEEEE). Positions 496–513 (SEEEEEEEEEEEEEEEEE) are enriched in acidic residues.

It belongs to the GAB family. As to quaternary structure, interacts with PIK3R/p85, SHP2 and GRAP2/MONA. May interact with Grb2. In terms of processing, phosphorylated on tyrosine residue(s) after macrophage colony-stimulating factor (M-CSF) receptor stimulation. Highly expressed in spleen and thymus and weakly in brain, heart, lung, kidney, uterus, and embryonic stem cells. Also expressed in myeloid and macrophage cell lines.

The chain is GRB2-associated-binding protein 3 (Gab3) from Mus musculus (Mouse).